The primary structure comprises 277 residues: Tryptophan synthase alpha chain (277 aa).

Residues Glu42 and Glu53 each act as proton acceptor in the active site.

This sequence belongs to the TrpA family. In terms of assembly, tetramer of two alpha and two beta chains.

The enzyme catalyses (1S,2R)-1-C-(indol-3-yl)glycerol 3-phosphate + L-serine = D-glyceraldehyde 3-phosphate + L-tryptophan + H2O. The protein operates within amino-acid biosynthesis; L-tryptophan biosynthesis; L-tryptophan from chorismate: step 5/5. Functionally, the alpha subunit is responsible for the aldol cleavage of indoleglycerol phosphate to indole and glyceraldehyde 3-phosphate. The chain is Tryptophan synthase alpha chain from Natronomonas pharaonis (strain ATCC 35678 / DSM 2160 / CIP 103997 / JCM 8858 / NBRC 14720 / NCIMB 2260 / Gabara) (Halobacterium pharaonis).